A 452-amino-acid polypeptide reads, in one-letter code: Imidazoleglycerol-phosphate dehydratase (452 aa).

The unknown activity stretch occupies residues 1–233; that stretch reads MASPVQALLL…VGASVVLTPG (233 aa). The tract at residues 234–452 is imidazoleglycerol-phosphate dehydratase; that stretch reads LGELLDLVPA…GVPSTKGVLA (219 aa).

The protein belongs to the imidazoleglycerol-phosphate dehydratase family.

It catalyses the reaction D-erythro-1-(imidazol-4-yl)glycerol 3-phosphate = 3-(imidazol-4-yl)-2-oxopropyl phosphate + H2O. The protein operates within amino-acid biosynthesis; L-histidine biosynthesis; L-histidine from 5-phospho-alpha-D-ribose 1-diphosphate: step 6/9. This Phytophthora nicotianae (Potato buckeye rot agent) protein is Imidazoleglycerol-phosphate dehydratase (HIS3).